The sequence spans 741 residues: Zinc finger and BTB domain-containing protein 20 (741 aa).

Residues M1–E17 are compositionally biased toward basic and acidic residues. Residues M1 to S28 are disordered. Residues C104–Q167 form the BTB domain. The disordered stretch occupies residues G203–H235. Residues D206 to H235 are compositionally biased toward polar residues. T211 carries the phosphothreonine modification. K330 participates in a covalent cross-link: Glycyl lysine isopeptide (Lys-Gly) (interchain with G-Cter in SUMO1); alternate. A Glycyl lysine isopeptide (Lys-Gly) (interchain with G-Cter in SUMO2); alternate cross-link involves residue K330. The disordered stretch occupies residues R350–E440. S353 carries the post-translational modification Phosphoserine. A compositionally biased stretch (acidic residues) spans E354–E367. Position 357 is a phosphothreonine (T357). Residue K371 forms a Glycyl lysine isopeptide (Lys-Gly) (interchain with G-Cter in SUMO2) linkage. Low complexity predominate over residues A404–P423. 4 consecutive C2H2-type zinc fingers follow at residues Y578–H600, H606–H628, Y634–H656, and Y662–H684. Phosphothreonine is present on residues T690 and T695. The C2H2-type 5 zinc finger occupies Y715–H737. K723 is covalently cross-linked (Glycyl lysine isopeptide (Lys-Gly) (interchain with G-Cter in SUMO2)).

Can homodimerize. Binds to DNA. Sumoylated with SUMO1. As to expression, specifically expressed in early hippocampal neurons, cerebellar granule cells and gliogenic progenitors as well as in differentiated glia. Expressed in adult and aged myogenic satellite cells.

The protein resides in the nucleus. In terms of biological role, may be a transcription factor that may be involved in hematopoiesis, oncogenesis, and immune responses. Plays a role in postnatal myogenesis, may be involved in the regulation of satellite cells self-renewal. The polypeptide is Zinc finger and BTB domain-containing protein 20 (Zbtb20) (Mus musculus (Mouse)).